The chain runs to 333 residues: Olfactory receptor 1078 (333 aa).

The Extracellular segment spans residues 1–25 (MDSSNRTRVSEFLLLGFVENKDLQP). N-linked (GlcNAc...) asparagine glycosylation is present at Asn-5. The chain crosses the membrane as a helical span at residues 26-50 (LIYGLFLSMYLVTVIGNISIIVAII). The Cytoplasmic portion of the chain corresponds to 51–57 (SDPCLHT). The helical transmembrane segment at 58–79 (PMYFFLSNLSFVDICFISTTVP) threads the bilayer. Residues 80 to 100 (KMLVNIQTQNNVITYAGCITQ) are Extracellular-facing. Cys-97 and Cys-189 are disulfide-bonded. Residues 101-120 (IYFFLLFVELDNFLLTIMAY) form a helical membrane-spanning segment. The Cytoplasmic portion of the chain corresponds to 121–139 (DRYVAICHPMHYTVIMNYK). Residues 140–158 (LCGFLVLVSWIVSVLHALF) form a helical membrane-spanning segment. The Extracellular portion of the chain corresponds to 159-196 (QSLMMLALPFCTHLEIPHYFCEPNQVIQLTCSDAFLND). The helical transmembrane segment at 197–219 (LVIYFTLVLLATVPLAGIFYSYF) threads the bilayer. At 220 to 236 (KIVSSICAISSVHGKYK) the chain is on the cytoplasmic side. The chain crosses the membrane as a helical span at residues 237 to 260 (AFSTCASHLSVVSLFYCTGLGVYL). Residues 261 to 272 (SSAANNSSQASA) are Extracellular-facing. A helical transmembrane segment spans residues 273–292 (TASVMYTVVTPMVNPFIYSL). Over 293 to 333 (RNKDVKSVLKKTLCEEVIRSPPSLLHFFLVLCHLPCFIFCY) the chain is Cytoplasmic.

This sequence belongs to the G-protein coupled receptor 1 family. In terms of tissue distribution, olfactory epithelium.

It localises to the cell membrane. In terms of biological role, odorant receptor. The polypeptide is Olfactory receptor 1078 (Olr1078) (Rattus norvegicus (Rat)).